Consider the following 22-residue polypeptide: 65 kDa membrane protein (22 aa).

The interval 1-22 is disordered; the sequence is AAKPLDKSSSSLHHGYSKVHVP.

It is found in the cell membrane. In terms of biological role, binds various plasma and ECM-proteins. This is 65 kDa membrane protein from Staphylococcus aureus.